Consider the following 373-residue polypeptide: NAD-dependent protein deacylase SRT2 (373 aa).

A mitochondrion-targeting transit peptide spans 1 to 47; it reads MNMRRVFGGVSTDLFPSRSMYRPLQSGGNLVMLFKGCRRFVRTTCRV. The 299-residue stretch at 75–373 folds into the Deacetylase sirtuin-type domain; sequence DPPNMEDIHK…DVGSLSVPAL (299 aa). Residues 100–120 and 179–182 contribute to the NAD(+) site; these read GAGV…GAYS and QNVD. H196 serves as the catalytic Proton acceptor. Zn(2+) contacts are provided by C204, C207, C271, and C274. NAD(+)-binding positions include 311–313, 337–339, and V355; these read GSS and NIG.

It belongs to the sirtuin family. Class II subfamily. Binds to the promoter region of genes influenced by ethylene. Interacts with ENAP1; this interaction is enhanced in the presence of ethylene. Zn(2+) serves as cofactor.

The protein localises to the mitochondrion matrix. The protein resides in the nucleus. It carries out the reaction N(6)-acetyl-L-lysyl-[protein] + NAD(+) + H2O = 2''-O-acetyl-ADP-D-ribose + nicotinamide + L-lysyl-[protein]. Its function is as follows. NAD-dependent protein deacylase. Catalyzes the NAD-dependent hydrolysis of acyl groups from lysine residues. Involved in responses to ethylene leading to the transcriptional repression of some ethylene-responsive genes via the regulation of histone acetylation H3K9Ac. Negatively regulates plant basal defense against plant pathogens, possibly by suppressing salicylic acid biosynthesis. The sequence is that of NAD-dependent protein deacylase SRT2 from Arabidopsis thaliana (Mouse-ear cress).